Reading from the N-terminus, the 682-residue chain is Probable xyloglucan glycosyltransferase 6 (682 aa).

The next 2 membrane-spanning stretches (helical) occupy residues 109 to 129 (LIKG…AAYF) and 173 to 193 (IVLF…CFWI). Asp260 is a catalytic residue. Substrate-binding residues include Asp319 and Asp321. The active site involves Asp413. The next 2 membrane-spanning stretches (helical) occupy residues 491-511 (LILP…TMFF) and 516-536 (LPSW…IIPA). Position 608 is a phosphoserine (Ser608). 2 consecutive transmembrane segments (helical) span residues 632–651 (LYRT…VRSL) and 657–677 (IHFY…LDLI).

This sequence belongs to the glycosyltransferase 2 family. Plant cellulose synthase-like C subfamily. As to quaternary structure, homodimer. As to expression, mainly expressed in flowers and seeds, and, to a lower extent, in seedlings, roots, leaves and stems.

The protein resides in the golgi apparatus membrane. Functionally, probable beta-1,4-glucan synthase rather involved in the synthesis of the xyloglucan backbone than cellulose. Seems to work simultaneously with xyloglucan 6-xylosyltransferase. Xyloglucan is a noncellulosic polysaccharides of plant cell wall and consists of a glucan backbone substituted by xylose, galactose and fucose. The sequence is that of Probable xyloglucan glycosyltransferase 6 from Arabidopsis thaliana (Mouse-ear cress).